The sequence spans 459 residues: MAARNWSRVWVGGTVILISFIAFSSQIFVIWPWYGREISLDLLKLLVPLNLAAFMIFWNYRLCVITSPGSVPEGWRPNIGAMDGMEVKKGTHTPRYCKNCEHYKPPRAHHCRQCKTCWLKLDHHCPWIGNCVGFYNQGHFIRFLLWVDIGTTFHLIIMVRRVLYIAEYYHQEPTLADVLFLVFNFATCVPVWLCVGMFSIYHVYLACGNSTTIEGWEKDKVATLIRRGKIKEVKYPYNIGIYKNIKSVLGPNPFLWLWPQKMQGDGLSFPVNPSAGDHTTQYFWPPQDPSRLPNPPPIPAHASPFVYGNNGFNPNLQPTNSLRARRSSTPHIDEDEHSHERDQYRHYSSGEERDNDSISTSSSPKPYLSDYDHYDEGPMYPGERMTALIPRVRRGSEGWEVAPGGGWNAYSGMMDEEVGWDDEVGYDEAPGEGPYVERPWEMRGRYNVYDTEEESGYAH.

Residues 1-9 (MAARNWSRV) lie on the Cytoplasmic side of the membrane. Residues 10 to 30 (WVGGTVILISFIAFSSQIFVI) traverse the membrane as a helical segment. Over 31–37 (WPWYGRE) the chain is Lumenal. The helical transmembrane segment at 38–58 (ISLDLLKLLVPLNLAAFMIFW) threads the bilayer. The Cytoplasmic segment spans residues 59 to 138 (NYRLCVITSP…GNCVGFYNQG (80 aa)). Residues 95 to 145 (RYCKNCEHYKPPRAHHCRQCKTCWLKLDHHCPWIGNCVGFYNQGHFIRFLL) enclose the DHHC domain. Catalysis depends on C125, which acts as the S-palmitoyl cysteine intermediate. A helical transmembrane segment spans residues 139-159 (HFIRFLLWVDIGTTFHLIIMV). The Lumenal segment spans residues 160-177 (RRVLYIAEYYHQEPTLAD). A helical membrane pass occupies residues 178–198 (VLFLVFNFATCVPVWLCVGMF). Topologically, residues 199-459 (SIYHVYLACG…DTEEESGYAH (261 aa)) are cytoplasmic. A disordered region spans residues 278–379 (HTTQYFWPPQ…DYDHYDEGPM (102 aa)). The span at 286 to 299 (PQDPSRLPNPPPIP) shows a compositional bias: pro residues. The segment covering 310-322 (NGFNPNLQPTNSL) has biased composition (polar residues). The segment covering 331 to 356 (HIDEDEHSHERDQYRHYSSGEERDND) has biased composition (basic and acidic residues).

Belongs to the DHHC palmitoyltransferase family. PFA4 subfamily.

Its subcellular location is the endoplasmic reticulum membrane. It carries out the reaction L-cysteinyl-[protein] + hexadecanoyl-CoA = S-hexadecanoyl-L-cysteinyl-[protein] + CoA. Mediates the reversible addition of palmitate to target proteins, thereby regulating their membrane association and biological function. This is Palmitoyltransferase PFA4 from Cryptococcus neoformans var. neoformans serotype D (strain B-3501A) (Filobasidiella neoformans).